Reading from the N-terminus, the 543-residue chain is Reticulophagy regulator 2 (543 aa).

The next 3 membrane-spanning stretches (helical) occupy residues 12–32, 100–120, and 204–224; these read AGGGPGMGLSLGLGLGLSLGM, SLRPFFLLSVSLLAYFLLDLW, and VPGIMISYIVLLSILLWPLVV. Residues 254-265 show a composition bias toward basic residues; sequence LHHKHDKRKRQG. A disordered region spans residues 254–287; it reads LHHKHDKRKRQGKNAPPGGDEPLAETESESEAEL. Residues 275–285 are compositionally biased toward acidic residues; it reads PLAETESESEA. Position 279 is a phosphothreonine (threonine 279). Serine 281, serine 283, serine 291, and serine 311 each carry phosphoserine. Residue threonine 334 is modified to Phosphothreonine. 2 disordered regions span residues 336-394 and 411-486; these read VSED…DVAA and HFNG…EEEA. Serine 337, serine 344, serine 347, and serine 385 each carry phosphoserine. A compositionally biased stretch (pro residues) spans 461–480; the sequence is APSPSILPPVPQDSPQPLPA. An LIR motif motif is present at residues 490–495; it reads EDFELL. A disordered region spans residues 504–543; sequence NAELGLEPETPPKPPDAPPLGPDIHSLVQSDQEAQAVAEP. The segment covering 512 to 524 has biased composition (pro residues); the sequence is ETPPKPPDAPPLG.

The protein belongs to the RETREG family. In terms of assembly, interacts with ATG8 family modifier proteins MAP1LC3A, MAP1LC3B, MAP1LC3C, GABARAP, GABARAPL1 and GABARAPL2. Shows higher affinity for GABARAPL1 than for MAP1LC3B. Interacts with CANX.

It is found in the endoplasmic reticulum membrane. Its function is as follows. Endoplasmic reticulum (ER)-anchored autophagy regulator which exists in an inactive state under basal conditions but is activated following cellular stress. When activated, induces ER fragmentation and mediates ER delivery into lysosomes through sequestration into autophagosomes via interaction with ATG8 family proteins. Required for collagen quality control in a LIR motif-independent manner. In Homo sapiens (Human), this protein is Reticulophagy regulator 2.